The following is a 601-amino-acid chain: Elongation factor 4 (601 aa).

Residues 7-189 (DRIRNFSIIA…ALVTRLPAPK (183 aa)) enclose the tr-type G domain. GTP is bound by residues 19–24 (DHGKST) and 136–139 (NKVD).

Belongs to the TRAFAC class translation factor GTPase superfamily. Classic translation factor GTPase family. LepA subfamily.

It is found in the cell inner membrane. The catalysed reaction is GTP + H2O = GDP + phosphate + H(+). Required for accurate and efficient protein synthesis under certain stress conditions. May act as a fidelity factor of the translation reaction, by catalyzing a one-codon backward translocation of tRNAs on improperly translocated ribosomes. Back-translocation proceeds from a post-translocation (POST) complex to a pre-translocation (PRE) complex, thus giving elongation factor G a second chance to translocate the tRNAs correctly. Binds to ribosomes in a GTP-dependent manner. The sequence is that of Elongation factor 4 from Granulibacter bethesdensis (strain ATCC BAA-1260 / CGDNIH1).